Consider the following 216-residue polypeptide: Pyridoxine/pyridoxamine 5'-phosphate oxidase (216 aa).

Residues 12–15 and Lys-70 contribute to the substrate site; that span reads RREY. FMN contacts are provided by residues 65–70, 80–81, Arg-86, Lys-87, and Gln-109; these read RVVLLK and YT. Substrate contacts are provided by Tyr-127 and Arg-131. Residues 144 to 145 and Trp-189 contribute to the FMN site; that span reads QS. 195–197 serves as a coordination point for substrate; sequence RLH. Arg-199 provides a ligand contact to FMN.

It belongs to the pyridoxamine 5'-phosphate oxidase family. As to quaternary structure, homodimer. The cofactor is FMN.

It carries out the reaction pyridoxamine 5'-phosphate + O2 + H2O = pyridoxal 5'-phosphate + H2O2 + NH4(+). The catalysed reaction is pyridoxine 5'-phosphate + O2 = pyridoxal 5'-phosphate + H2O2. Its pathway is cofactor metabolism; pyridoxal 5'-phosphate salvage; pyridoxal 5'-phosphate from pyridoxamine 5'-phosphate: step 1/1. It functions in the pathway cofactor metabolism; pyridoxal 5'-phosphate salvage; pyridoxal 5'-phosphate from pyridoxine 5'-phosphate: step 1/1. Catalyzes the oxidation of either pyridoxine 5'-phosphate (PNP) or pyridoxamine 5'-phosphate (PMP) into pyridoxal 5'-phosphate (PLP). This chain is Pyridoxine/pyridoxamine 5'-phosphate oxidase, found in Blochmanniella pennsylvanica (strain BPEN).